The sequence spans 330 residues: Biotin synthase (330 aa).

The Radical SAM core domain occupies 55 to 282 (NAVQRSTLLS…TAYVRLSAGR (228 aa)). 3 residues coordinate [4Fe-4S] cluster: C70, C74, and C77. [2Fe-2S] cluster contacts are provided by C114, C145, C205, and R277.

Belongs to the radical SAM superfamily. Biotin synthase family. As to quaternary structure, homodimer. The cofactor is [4Fe-4S] cluster. [2Fe-2S] cluster is required as a cofactor.

The catalysed reaction is (4R,5S)-dethiobiotin + (sulfur carrier)-SH + 2 reduced [2Fe-2S]-[ferredoxin] + 2 S-adenosyl-L-methionine = (sulfur carrier)-H + biotin + 2 5'-deoxyadenosine + 2 L-methionine + 2 oxidized [2Fe-2S]-[ferredoxin]. The protein operates within cofactor biosynthesis; biotin biosynthesis; biotin from 7,8-diaminononanoate: step 2/2. In terms of biological role, catalyzes the conversion of dethiobiotin (DTB) to biotin by the insertion of a sulfur atom into dethiobiotin via a radical-based mechanism. In Methylibium petroleiphilum (strain ATCC BAA-1232 / LMG 22953 / PM1), this protein is Biotin synthase.